The primary structure comprises 236 residues: MTEPLTPRDRLIVALDMASRDEAERLIDRIGDAAAFYKIGYRLGYAGGLALAERLAASGVKVFLDLKLHDIGNTVEEGVQSLARLGAHLLTVHAYPQTMRAARRGRDSVPGSALRLLAVTVLTSYDDADLREAGYAGGVADLVASRAAAARDIGIDGIVCAATEAAAVRAVIGPDRLIVTPGIRPAGAASGDQKRVVTPAAAIRAGADHLVVGRPITEAADPRAAARSIVSEIAEA.

Residues Asp16, Lys38, 65 to 74 (DLKLHDIGNT), Thr123, Arg184, Gln193, Gly213, and Arg214 each bind substrate. Residue Lys67 is the Proton donor of the active site.

It belongs to the OMP decarboxylase family. Type 1 subfamily. Homodimer.

The catalysed reaction is orotidine 5'-phosphate + H(+) = UMP + CO2. It functions in the pathway pyrimidine metabolism; UMP biosynthesis via de novo pathway; UMP from orotate: step 2/2. Functionally, catalyzes the decarboxylation of orotidine 5'-monophosphate (OMP) to uridine 5'-monophosphate (UMP). This chain is Orotidine 5'-phosphate decarboxylase, found in Methylobacterium sp. (strain 4-46).